Reading from the N-terminus, the 576-residue chain is Arginine--tRNA ligase (576 aa).

The 'HIGH' region motif lies at 122-132 (PNVAKQMHVGH).

This sequence belongs to the class-I aminoacyl-tRNA synthetase family. In terms of assembly, monomer.

The protein localises to the cytoplasm. The enzyme catalyses tRNA(Arg) + L-arginine + ATP = L-arginyl-tRNA(Arg) + AMP + diphosphate. The polypeptide is Arginine--tRNA ligase (Yersinia pseudotuberculosis serotype O:1b (strain IP 31758)).